The sequence spans 454 residues: Bifunctional protein GlmU (454 aa).

The tract at residues 1–232 (MTDRTCLSIV…VDNVIGINNR (232 aa)) is pyrophosphorylase. UDP-N-acetyl-alpha-D-glucosamine is bound by residues 11–14 (LAAG), Lys-25, Gln-78, and 83–84 (GT). Position 108 (Asp-108) interacts with Mg(2+). UDP-N-acetyl-alpha-D-glucosamine contacts are provided by Gly-144, Glu-158, Asn-173, and Asn-230. Residue Asn-230 participates in Mg(2+) binding. The linker stretch occupies residues 233–253 (AELAEAETIWQNRKRRELMLS). An N-acetyltransferase region spans residues 254–454 (GVTLIAPETV…AIKAAKSVSK (201 aa)). Arg-319 and Lys-337 together coordinate UDP-N-acetyl-alpha-D-glucosamine. His-349 (proton acceptor) is an active-site residue. UDP-N-acetyl-alpha-D-glucosamine is bound by residues Tyr-352 and Asn-363. Residues Ala-366, 372-373 (NY), Ser-391, Ser-409, and Arg-426 contribute to the acetyl-CoA site.

In the N-terminal section; belongs to the N-acetylglucosamine-1-phosphate uridyltransferase family. This sequence in the C-terminal section; belongs to the transferase hexapeptide repeat family. As to quaternary structure, homotrimer. The cofactor is Mg(2+).

The protein localises to the cytoplasm. The catalysed reaction is alpha-D-glucosamine 1-phosphate + acetyl-CoA = N-acetyl-alpha-D-glucosamine 1-phosphate + CoA + H(+). It catalyses the reaction N-acetyl-alpha-D-glucosamine 1-phosphate + UTP + H(+) = UDP-N-acetyl-alpha-D-glucosamine + diphosphate. Its pathway is nucleotide-sugar biosynthesis; UDP-N-acetyl-alpha-D-glucosamine biosynthesis; N-acetyl-alpha-D-glucosamine 1-phosphate from alpha-D-glucosamine 6-phosphate (route II): step 2/2. It participates in nucleotide-sugar biosynthesis; UDP-N-acetyl-alpha-D-glucosamine biosynthesis; UDP-N-acetyl-alpha-D-glucosamine from N-acetyl-alpha-D-glucosamine 1-phosphate: step 1/1. It functions in the pathway bacterial outer membrane biogenesis; LPS lipid A biosynthesis. In terms of biological role, catalyzes the last two sequential reactions in the de novo biosynthetic pathway for UDP-N-acetylglucosamine (UDP-GlcNAc). The C-terminal domain catalyzes the transfer of acetyl group from acetyl coenzyme A to glucosamine-1-phosphate (GlcN-1-P) to produce N-acetylglucosamine-1-phosphate (GlcNAc-1-P), which is converted into UDP-GlcNAc by the transfer of uridine 5-monophosphate (from uridine 5-triphosphate), a reaction catalyzed by the N-terminal domain. The chain is Bifunctional protein GlmU from Brucella melitensis biotype 1 (strain ATCC 23456 / CCUG 17765 / NCTC 10094 / 16M).